A 143-amino-acid polypeptide reads, in one-letter code: Large ribosomal subunit protein uL11 (143 aa).

Belongs to the universal ribosomal protein uL11 family. Part of the ribosomal stalk of the 50S ribosomal subunit. Interacts with L10 and the large rRNA to form the base of the stalk. L10 forms an elongated spine to which L12 dimers bind in a sequential fashion forming a multimeric L10(L12)X complex. One or more lysine residues are methylated.

Forms part of the ribosomal stalk which helps the ribosome interact with GTP-bound translation factors. This chain is Large ribosomal subunit protein uL11, found in Ectopseudomonas mendocina (strain ymp) (Pseudomonas mendocina).